A 415-amino-acid polypeptide reads, in one-letter code: MSNVKNLAKKAKIAARTLSVLDTEAKNSALEAIASQLLADKETILQANGKDLDNGKKMGLSPSLLDRLALTSARIDGMVEGIKQVVELEDPVGQVMETWQRPNGLEIAKVRVPMGVIGMVYEARPNVTVDTCALCLKAGSAVVLRGSSSALNSNRALVSAIKKGLAKTAIPEDTVQFVDSEDRGAVDEMLRLNGLLDLVIPRGGAGLIRRVVENATVPVIETGVGNCHVYVDVDADPGMALEILLNAKCQRYGVCNAAESLLVHEGIAANWLPGAVQELNTRGVEIRGCSKVVEILSGVKKAEDSDWATEFLSPVLAIKVVKDFQDALDHIQQYSSGHSESIVTNNQNTAAEFLRQVDAAAVYHNASTRFTDGFEYGFGAEIGISTQKLHARGPMGLRELTSYKYVVKGTGQVRP.

It belongs to the gamma-glutamyl phosphate reductase family.

The protein localises to the cytoplasm. The enzyme catalyses L-glutamate 5-semialdehyde + phosphate + NADP(+) = L-glutamyl 5-phosphate + NADPH + H(+). It participates in amino-acid biosynthesis; L-proline biosynthesis; L-glutamate 5-semialdehyde from L-glutamate: step 2/2. Catalyzes the NADPH-dependent reduction of L-glutamate 5-phosphate into L-glutamate 5-semialdehyde and phosphate. The product spontaneously undergoes cyclization to form 1-pyrroline-5-carboxylate. This chain is Gamma-glutamyl phosphate reductase, found in Desulforamulus reducens (strain ATCC BAA-1160 / DSM 100696 / MI-1) (Desulfotomaculum reducens).